The primary structure comprises 718 residues: Probable glycerol-3-phosphate acyltransferase, mitochondrial (718 aa).

The HXXXXD motif signature appears at 167-172; sequence HRSHLD. Residues 409–425 form a helical membrane-spanning segment; that stretch reads MMCSISPVAVVSCLLLA.

Belongs to the GPAT/DAPAT family.

Its subcellular location is the mitochondrion membrane. It carries out the reaction sn-glycerol 3-phosphate + an acyl-CoA = a 1-acyl-sn-glycero-3-phosphate + CoA. It functions in the pathway phospholipid metabolism; CDP-diacylglycerol biosynthesis; CDP-diacylglycerol from sn-glycerol 3-phosphate: step 1/3. The polypeptide is Probable glycerol-3-phosphate acyltransferase, mitochondrial (acl-6) (Caenorhabditis elegans).